We begin with the raw amino-acid sequence, 122 residues long: uncharacterized protein (122 aa).

The protein resides in the plastid. This is an uncharacterized protein from Euglena longa (Euglenophycean alga).